A 397-amino-acid chain; its full sequence is MASITHRRNAVLGAAFLMATSAIGPGFLTQTATFTNTLLASFGFVILLSILLDIGAQLNIWRIVIVSGKRAQDISNAVFPKAGYFLAALIVMGGLAFNIGNVGGAGLGLNSIFGIAPEMGAVISGIIAILIFLRKEAGLLMDRFAQLMGFIMVVLTFYVMFKTEPPVVEAAYHSFIPEQIDPIAIVTLVGGTVGGYITFAGAHRLLDAGIQGEKAMAEVSRSSVSAILIASTMRVVLFLAVLGVVSKGVSLNPKNPAETPFEYVAGNFGQVLFGVVIWAASVTSVIGAAYTSVSFLTTLCPTIERNRNRWIIAFIVISTVVLVTVGKPAAVLVFVGTLNGLILPIALALILLAAYRSDIVGTYKHPVFLAFSGWFVVIIMAILSGKTIISYISSFFS.

11 consecutive transmembrane segments (helical) span residues 9–29 (NAVL…GFLT), 38–58 (LLAS…GAQL), 85–105 (FLAA…VGGA), 112–132 (IFGI…ILIF), 148–168 (MGFI…PPVV), 182–202 (PIAI…FAGA), 226–246 (AILI…GVVS), 271–291 (VLFG…AAYT), 310–330 (WIIA…KPAA), 331–351 (VLVF…ALIL), and 365–385 (HPVF…ILSG).

It belongs to the NRAMP family.

It is found in the cell membrane. This is an uncharacterized protein from Haemophilus influenzae (strain ATCC 51907 / DSM 11121 / KW20 / Rd).